Here is a 437-residue protein sequence, read N- to C-terminus: tRNA-2-methylthio-N(6)-dimethylallyladenosine synthase (437 aa).

In terms of domain architecture, MTTase N-terminal spans 1 to 115 (MKVYIETMGC…ISQVIHKEKA (115 aa)). [4Fe-4S] cluster-binding residues include Cys10, Cys46, Cys78, Cys148, Cys152, and Cys155. The region spanning 134 to 367 (KKAQIRSLLN…QNRHKEILEE (234 aa)) is the Radical SAM core domain. The 67-residue stretch at 370–436 (KLEVGKTHVV…KGRLMAATKG (67 aa)) folds into the TRAM domain.

Belongs to the methylthiotransferase family. MiaB subfamily. As to quaternary structure, monomer. Requires [4Fe-4S] cluster as cofactor.

It localises to the cytoplasm. The enzyme catalyses N(6)-dimethylallyladenosine(37) in tRNA + (sulfur carrier)-SH + AH2 + 2 S-adenosyl-L-methionine = 2-methylsulfanyl-N(6)-dimethylallyladenosine(37) in tRNA + (sulfur carrier)-H + 5'-deoxyadenosine + L-methionine + A + S-adenosyl-L-homocysteine + 2 H(+). Functionally, catalyzes the methylthiolation of N6-(dimethylallyl)adenosine (i(6)A), leading to the formation of 2-methylthio-N6-(dimethylallyl)adenosine (ms(2)i(6)A) at position 37 in tRNAs that read codons beginning with uridine. In Helicobacter pylori (strain ATCC 700392 / 26695) (Campylobacter pylori), this protein is tRNA-2-methylthio-N(6)-dimethylallyladenosine synthase.